The following is a 365-amino-acid chain: Popy Class I histocompatibility antigen, A-1 alpha chain (365 aa).

The N-terminal stretch at 1–24 is a signal peptide; that stretch reads MAIMAPRTLLLLLSGALALTQTWA. The tract at residues 25 to 114 is alpha-1; sequence GSHSMRYFST…LRGYYNQSDG (90 aa). At 25 to 308 the chain is on the extracellular side; sequence GSHSMRYFST…ELSSQPTIPI (284 aa). A glycan (N-linked (GlcNAc...) asparagine) is linked at asparagine 110. An alpha-2 region spans residues 115–206; it reads GSHTIQRMFG…ENGKETLQRT (92 aa). 2 disulfides stabilise this stretch: cysteine 125–cysteine 188 and cysteine 227–cysteine 283. Positions 207–298 are alpha-3; sequence DAPKTHMTHH…GLPEPLTLRW (92 aa). One can recognise an Ig-like C1-type domain in the interval 209 to 297; that stretch reads PKTHMTHHPV…EGLPEPLTLR (89 aa). Positions 299–308 are connecting peptide; sequence ELSSQPTIPI. A helical transmembrane segment spans residues 309 to 332; the sequence is VGIIAGLVLLGAVITGAVVAAVMW. Over 333-365 the chain is Cytoplasmic; it reads RRRNSDRKGGSYSQAASNDSAQGSDVSLTACKV. Positions 340 to 365 are disordered; that stretch reads KGGSYSQAASNDSAQGSDVSLTACKV. Phosphoserine is present on serine 343. Residues 343 to 359 are compositionally biased toward polar residues; the sequence is SYSQAASNDSAQGSDVS. Tyrosine 344 bears the Phosphotyrosine mark. Phosphoserine occurs at positions 345, 349, 352, 356, and 359.

It belongs to the MHC class I family. Heterodimer of an alpha chain and a beta chain (beta-2-microglobulin).

The protein localises to the membrane. In terms of biological role, involved in the presentation of foreign antigens to the immune system. The polypeptide is Popy Class I histocompatibility antigen, A-1 alpha chain (Pongo pygmaeus (Bornean orangutan)).